A 263-amino-acid polypeptide reads, in one-letter code: Isatin hydrolase (263 aa).

62-66 (FFAWN) contributes to the substrate binding site. 3 residues coordinate Mn(2+): His-73, His-77, and Asp-79. Catalysis depends on His-83, which acts as the Proton donor/acceptor. His-212 contacts substrate.

Belongs to the Cyclase 1 superfamily. In terms of assembly, homodimer. Mn(2+) is required as a cofactor.

It catalyses the reaction isatin + H2O = isatinate + H(+). Inhibited by thioisatinate. Its function is as follows. Involved in the degradation of the plant hormone indole-3-acetic acid (IAA). Catalyzes the hydrolysis of the cyclic amide bond (lactam) of isatin (1H-indole-2,3-dione) to yield isatinate (2-(2-aminophenyl)-2-oxoacetate). In Roseibium aggregatum (strain ATCC 25650 / DSM 13394 / JCM 20685 / NBRC 16684 / NCIMB 2208 / IAM 12614 / B1) (Stappia aggregata), this protein is Isatin hydrolase.